Here is a 649-residue protein sequence, read N- to C-terminus: Threonine--tRNA ligase (649 aa).

One can recognise a TGS domain in the interval 1-61 (MIKITFPDGA…TQDGSIEIVT (61 aa)). The catalytic stretch occupies residues 242–540 (DHRKLGKELD…LIETYKGAFP (299 aa)). Residues cysteine 336, histidine 387, and histidine 517 each contribute to the Zn(2+) site.

It belongs to the class-II aminoacyl-tRNA synthetase family. Homodimer. The cofactor is Zn(2+).

Its subcellular location is the cytoplasm. It carries out the reaction tRNA(Thr) + L-threonine + ATP = L-threonyl-tRNA(Thr) + AMP + diphosphate + H(+). In terms of biological role, catalyzes the attachment of threonine to tRNA(Thr) in a two-step reaction: L-threonine is first activated by ATP to form Thr-AMP and then transferred to the acceptor end of tRNA(Thr). Also edits incorrectly charged L-seryl-tRNA(Thr). The polypeptide is Threonine--tRNA ligase (Streptococcus mutans serotype c (strain ATCC 700610 / UA159)).